The following is a 282-amino-acid chain: 4-diphosphocytidyl-2-C-methyl-D-erythritol kinase (282 aa).

The active site involves Lys-11. Position 95-105 (95-105 (PMGGGVGGGSS)) interacts with ATP. Asp-137 is a catalytic residue.

This sequence belongs to the GHMP kinase family. IspE subfamily.

The catalysed reaction is 4-CDP-2-C-methyl-D-erythritol + ATP = 4-CDP-2-C-methyl-D-erythritol 2-phosphate + ADP + H(+). It functions in the pathway isoprenoid biosynthesis; isopentenyl diphosphate biosynthesis via DXP pathway; isopentenyl diphosphate from 1-deoxy-D-xylulose 5-phosphate: step 3/6. Its function is as follows. Catalyzes the phosphorylation of the position 2 hydroxy group of 4-diphosphocytidyl-2C-methyl-D-erythritol. In Haemophilus ducreyi (strain 35000HP / ATCC 700724), this protein is 4-diphosphocytidyl-2-C-methyl-D-erythritol kinase.